Consider the following 148-residue polypeptide: Small ribosomal subunit protein uS13 (148 aa).

This sequence belongs to the universal ribosomal protein uS13 family. Part of the 30S ribosomal subunit. Forms a loose heterodimer with protein S19. Forms two bridges to the 50S subunit in the 70S ribosome.

Its function is as follows. Located at the top of the head of the 30S subunit, it contacts several helices of the 16S rRNA. In the 70S ribosome it contacts the 23S rRNA (bridge B1a) and protein L5 of the 50S subunit (bridge B1b), connecting the 2 subunits; these bridges are implicated in subunit movement. This is Small ribosomal subunit protein uS13 from Pyrococcus horikoshii (strain ATCC 700860 / DSM 12428 / JCM 9974 / NBRC 100139 / OT-3).